A 147-amino-acid polypeptide reads, in one-letter code: Hemoglobin subunit epsilon (147 aa).

A Globin domain is found at 3–147 (HFTAEEKATV…VANALAHKYH (145 aa)). 2 positions are modified to phosphoserine: S14 and S51. Residues H64 and H93 each contribute to the heme b site.

It belongs to the globin family. As to quaternary structure, heterotetramer of two alpha chains and two epsilon chains in early embryonic hemoglobin Gower-2; two zeta chains and two epsilon chains in early embryonic hemoglobin Gower-1. As to expression, red blood cells.

Functionally, the epsilon chain is a beta-type chain of early mammalian embryonic hemoglobin. The chain is Hemoglobin subunit epsilon (HBE1) from Bradypus tridactylus (Pale-throated three-toed sloth).